A 1006-amino-acid chain; its full sequence is Probable beta-galactosidase A (1006 aa).

A signal peptide spans Met1 to Gly18. Substrate contacts are provided by Tyr96, Asn140, Ala141, and Glu142. A glycan (N-linked (GlcNAc...) asparagine) is linked at Asn156. Asn199 provides a ligand contact to substrate. Residue Glu200 is the Proton donor of the active site. Cys205 and Cys206 are joined by a disulfide. Asn207 carries an N-linked (GlcNAc...) asparagine glycan. A substrate-binding site is contributed by Tyr260. Cys266 and Cys315 are disulfide-bonded. Glu298 acts as the Nucleophile in catalysis. A substrate-binding site is contributed by Tyr364. N-linked (GlcNAc...) asparagine glycans are attached at residues Asn373, Asn402, Asn422, Asn622, Asn777, and Asn914.

Belongs to the glycosyl hydrolase 35 family.

Its subcellular location is the secreted. The enzyme catalyses Hydrolysis of terminal non-reducing beta-D-galactose residues in beta-D-galactosides.. In terms of biological role, cleaves beta-linked terminal galactosyl residues from gangliosides, glycoproteins, and glycosaminoglycans. The polypeptide is Probable beta-galactosidase A (lacA) (Neosartorya fischeri (strain ATCC 1020 / DSM 3700 / CBS 544.65 / FGSC A1164 / JCM 1740 / NRRL 181 / WB 181) (Aspergillus fischerianus)).